Consider the following 394-residue polypeptide: Phosphopentomutase (394 aa).

6 residues coordinate Mn(2+): D13, D286, H291, D327, H328, and H339.

It belongs to the phosphopentomutase family. Mn(2+) is required as a cofactor.

The protein localises to the cytoplasm. It carries out the reaction 2-deoxy-alpha-D-ribose 1-phosphate = 2-deoxy-D-ribose 5-phosphate. The enzyme catalyses alpha-D-ribose 1-phosphate = D-ribose 5-phosphate. It participates in carbohydrate degradation; 2-deoxy-D-ribose 1-phosphate degradation; D-glyceraldehyde 3-phosphate and acetaldehyde from 2-deoxy-alpha-D-ribose 1-phosphate: step 1/2. Functionally, isomerase that catalyzes the conversion of deoxy-ribose 1-phosphate (dRib-1-P) and ribose 1-phosphate (Rib-1-P) to deoxy-ribose 5-phosphate (dRib-5-P) and ribose 5-phosphate (Rib-5-P), respectively. The protein is Phosphopentomutase of Bacillus cereus (strain AH187).